The following is a 202-amino-acid chain: MLDLLKISVTGDPSSGKTEACQVFEELGAFVISADKVSHSFLVPYTSEGQRVVDLLGPEIIVENTLNRKAIAKKVFGNRDLLLSLEKILHPGVCRFVEENYTQVVQAQKYSLFVVEVPLLYEIQYADWFDRVILISADTEIRKERFLKKTGGSDTSFDLRCARFSSLEEKILRADVVIENNGTKEEFRHKVKQCFKALKGTI.

Positions 6-202 (KISVTGDPSS…QCFKALKGTI (197 aa)) constitute a DPCK domain. Residue 14–19 (SSGKTE) participates in ATP binding.

This sequence belongs to the CoaE family.

Its subcellular location is the cytoplasm. The catalysed reaction is 3'-dephospho-CoA + ATP = ADP + CoA + H(+). Its pathway is cofactor biosynthesis; coenzyme A biosynthesis; CoA from (R)-pantothenate: step 5/5. In terms of biological role, catalyzes the phosphorylation of the 3'-hydroxyl group of dephosphocoenzyme A to form coenzyme A. This is Dephospho-CoA kinase from Chlamydia muridarum (strain MoPn / Nigg).